The primary structure comprises 296 residues: HTH-type transcriptional regulator IlvR (296 aa).

The HTH lysR-type domain maps to 1–58; it reads MDIRQFRHFAAVAETLHFGRAAERLGITQPPLSQSIQALEKALGAPLFARTKRHVELT. Residues 18–37 constitute a DNA-binding region (H-T-H motif); it reads FGRAAERLGITQPPLSQSIQ.

It belongs to the LysR transcriptional regulatory family.

Functionally, positively regulates the expression of the ilvD gene while negatively autoregulating its own expression. This is HTH-type transcriptional regulator IlvR (ilvR) from Caulobacter vibrioides (strain ATCC 19089 / CIP 103742 / CB 15) (Caulobacter crescentus).